A 424-amino-acid chain; its full sequence is Zygote arrest protein 1 (424 aa).

Disordered regions lie at residues 125–175 and 196–313; these read RTLQ…PMRF and GPGP…SPEL. Over residues 141-150 the composition is skewed to gly residues; that stretch reads GAEGTTGGGS. The segment covering 289–298 has biased composition (basic and acidic residues); the sequence is RARDGGDGRE. The segment at 326–409 adopts a 3CxxC-type zinc-finger fold; that stretch reads KYGYYHCKDC…RQDLCGRCKG (84 aa).

Belongs to the ZAR1 family. As to quaternary structure, interacts with YBX2. In terms of processing, ubiquitinated and degradaded by the proteasome during oocyte meiotic maturation, leading to MARDO (mitochondria-associated ribonucleoprotein domain) membraneless compartment dissolution. As to expression, ovary and testis.

The protein localises to the cytoplasm. It is found in the cytoplasmic ribonucleoprotein granule. Its function is as follows. mRNA-binding protein that mediates formation of MARDO (mitochondria-associated ribonucleoprotein domain), a membraneless compartment that stores maternal mRNAs in oocytes. MARDO assembly around mitochondria is directed by an increase in mitochondrial membrane potential during oocyte growth. Promotes formation of MARDO phase-separated membraneless compartment by undergoing liquid-liquid phase separation upon binding to maternal mRNAs. Binds to the 3'-UTR of maternal mRNAs. Maternal mRNAs stored in the MARDO are translationally repressed. Essential for female fertility and oocyte-to-embryo transition by coordinating maternal mRNA storage, translation and degradation. This Homo sapiens (Human) protein is Zygote arrest protein 1.